We begin with the raw amino-acid sequence, 414 residues long: Serine/threonine transporter SstT (414 aa).

8 helical membrane-spanning segments follow: residues 16-36 (GSLV…AWIS), 46-66 (LGTL…LMLV), 84-104 (ILFL…VFSF), 143-163 (ALLN…GFAL), 180-200 (AVTF…FGLV), 219-239 (LVVL…LLVF), 300-320 (MAGA…TLGV), and 332-352 (VVAS…LLLI).

It belongs to the dicarboxylate/amino acid:cation symporter (DAACS) (TC 2.A.23) family.

It is found in the cell inner membrane. The catalysed reaction is L-serine(in) + Na(+)(in) = L-serine(out) + Na(+)(out). It carries out the reaction L-threonine(in) + Na(+)(in) = L-threonine(out) + Na(+)(out). Its function is as follows. Involved in the import of serine and threonine into the cell, with the concomitant import of sodium (symport system). This Salmonella schwarzengrund (strain CVM19633) protein is Serine/threonine transporter SstT.